The chain runs to 213 residues: tRNA (guanine-N(7)-)-methyltransferase (213 aa).

Residues aspartate 40, glutamate 65, asparagine 92, and aspartate 118 each contribute to the S-adenosyl-L-methionine site. The active site involves aspartate 118. Substrate is bound by residues lysine 122 and aspartate 154.

It belongs to the class I-like SAM-binding methyltransferase superfamily. TrmB family.

It carries out the reaction guanosine(46) in tRNA + S-adenosyl-L-methionine = N(7)-methylguanosine(46) in tRNA + S-adenosyl-L-homocysteine. The protein operates within tRNA modification; N(7)-methylguanine-tRNA biosynthesis. In terms of biological role, catalyzes the formation of N(7)-methylguanine at position 46 (m7G46) in tRNA. This Synechococcus elongatus (strain ATCC 33912 / PCC 7942 / FACHB-805) (Anacystis nidulans R2) protein is tRNA (guanine-N(7)-)-methyltransferase.